The primary structure comprises 343 residues: Cilia- and flagella-associated protein 36 (343 aa).

2 positions are modified to phosphoserine: serine 85 and serine 147. Positions 147-187 (SDLEQEEMKILREVLRKSKEEYDQEEERKRKKQSSEAKMEE) form a coiled coil. The interval 165-188 (KEEYDQEEERKRKKQSSEAKMEEL) is disordered. Serine 201 carries the post-translational modification Phosphoserine. Composition is skewed to basic and acidic residues over residues 279 to 293 (QKRD…DTRT) and 301 to 323 (QKGK…AEEK). Residues 279–323 (QKRDKLLSMRKDTRTKQIQNTEQKGKPTREAEEMTEKPEMTAEEK) form a disordered region.

Belongs to the CFAP36 family. As to quaternary structure, interacts with ARL3.

The protein resides in the nucleus. The protein localises to the cytoplasm. Its subcellular location is the cell projection. It is found in the cilium. It localises to the flagellum. May act as an effector for ARL3. The sequence is that of Cilia- and flagella-associated protein 36 from Mus musculus (Mouse).